Consider the following 420-residue polypeptide: Glucose-1-phosphate adenylyltransferase (420 aa).

Alpha-D-glucose 1-phosphate contacts are provided by residues tyrosine 107, glycine 173, 188–189, and serine 206; that span reads EK.

Belongs to the bacterial/plant glucose-1-phosphate adenylyltransferase family. Homotetramer.

The catalysed reaction is alpha-D-glucose 1-phosphate + ATP + H(+) = ADP-alpha-D-glucose + diphosphate. Its pathway is glycan biosynthesis; glycogen biosynthesis. Involved in the biosynthesis of ADP-glucose, a building block required for the elongation reactions to produce glycogen. Catalyzes the reaction between ATP and alpha-D-glucose 1-phosphate (G1P) to produce pyrophosphate and ADP-Glc. This is Glucose-1-phosphate adenylyltransferase from Shewanella baltica (strain OS155 / ATCC BAA-1091).